Here is a 518-residue protein sequence, read N- to C-terminus: Membrane-bound lytic murein transglycosylase F (518 aa).

The N-terminal stretch at 1–21 is a signal peptide; the sequence is MKKLKINYLFIGILALLLAVA. The non-LT domain stretch occupies residues 22-269; sequence LWPSIPWFGK…RIEEKYLGHG (248 aa). Positions 270–518 are LT domain; the sequence is DDFDYVDTRT…SRKGSEEKQN (249 aa). Residue Glu-314 is part of the active site.

In the N-terminal section; belongs to the bacterial solute-binding protein 3 family. The protein in the C-terminal section; belongs to the transglycosylase Slt family.

It is found in the cell outer membrane. The enzyme catalyses Exolytic cleavage of the (1-&gt;4)-beta-glycosidic linkage between N-acetylmuramic acid (MurNAc) and N-acetylglucosamine (GlcNAc) residues in peptidoglycan, from either the reducing or the non-reducing ends of the peptidoglycan chains, with concomitant formation of a 1,6-anhydrobond in the MurNAc residue.. Functionally, murein-degrading enzyme that degrades murein glycan strands and insoluble, high-molecular weight murein sacculi, with the concomitant formation of a 1,6-anhydromuramoyl product. Lytic transglycosylases (LTs) play an integral role in the metabolism of the peptidoglycan (PG) sacculus. Their lytic action creates space within the PG sacculus to allow for its expansion as well as for the insertion of various structures such as secretion systems and flagella. This Shigella sonnei (strain Ss046) protein is Membrane-bound lytic murein transglycosylase F.